The primary structure comprises 284 residues: UTP--glucose-1-phosphate uridylyltransferase (284 aa).

It belongs to the UDPGP type 2 family.

It catalyses the reaction alpha-D-glucose 1-phosphate + UTP + H(+) = UDP-alpha-D-glucose + diphosphate. The polypeptide is UTP--glucose-1-phosphate uridylyltransferase (celA) (Komagataeibacter xylinus (Gluconacetobacter xylinus)).